Reading from the N-terminus, the 724-residue chain is Small conductance calcium-activated potassium channel protein 3 (724 aa).

The span at 1–11 shows a compositional bias: basic and acidic residues; it reads MDTSGHFHDSG. Disordered stretches follow at residues 1-161 and 232-251; these read MDTS…RDSN and ATHN…FPKA. The segment covering 34–58 has biased composition (pro residues); that stretch reads QPPPPPPPPAPPAAPQQPPGPPLQP. Over residues 59 to 88 the composition is skewed to low complexity; the sequence is QPLQLQQQQQQQQQQPPHPLSQLAQLQSQP. Residues 105 to 125 show a composition bias toward polar residues; sequence PSSNSTAILHPSSRQGSQLNL. Low complexity predominate over residues 131–140; it reads GHSPSSTATS. Ser160 is modified (phosphoserine). The span at 232–249 shows a compositional bias: polar residues; sequence ATHNHQHAGTTASSTTFP. Residues 281–301 form a helical membrane-spanning segment; sequence LIFGMFGIVVMVIETELSWGL. A helical transmembrane segment spans residues 308–328; the sequence is FSLALKCLISLSTIILLGLII. A helical membrane pass occupies residues 359-379; it reads ISLEMLVCAIHPIPGEYKFFW. The chain crosses the membrane as a helical span at residues 398–418; that stretch reads IILSIPMFLRLYLIARVMLLH. Residues 447 to 467 traverse the membrane as a helical segment; the sequence is LMTICPGTVLLVFSISLWIIA. An intramembrane region (pore-forming) is located at residues 487 to 507; it reads FLGAMWLISITFLSIGYGDMV. The helical transmembrane segment at 516 to 536 threads the bilayer; it reads VCLLTGIMGAGCTALVVAVVA. The interval 554-630 is calmodulin-binding; it reads DTQLTKRIKN…LVDLSKMQNV (77 aa). A coiled-coil region spans residues 635 to 662; it reads ITELNDRSEDLEKQIGSLESKLEHLTAS. The tract at residues 702 to 724 is disordered; the sequence is LSDSPIGVSSTSFPTPYTSSSSC. Over residues 710–724 the composition is skewed to low complexity; the sequence is SSTSFPTPYTSSSSC.

The protein belongs to the potassium channel KCNN family. KCa2.3/KCNN3 subfamily. In terms of assembly, homodimer. Heteromultimer with KCNN2 or KCNN1; this modulates plasma membrane expression and consequently the small conductance calcium-activated potassium channel activity. The complex is composed of 4 channel subunits each of which binds to a calmodulin subunit which regulates the channel activity through calcium-binding. Interacts with CALM1.

It is found in the cell membrane. The protein localises to the cytoplasm. Its subcellular location is the myofibril. The protein resides in the sarcomere. It localises to the z line. The enzyme catalyses K(+)(in) = K(+)(out). Its activity is regulated as follows. Inhibited by bee venom neurotoxin apamin. In terms of biological role, small conductance calcium-activated potassium channel that mediates the voltage-independent transmembrane transfer of potassium across the cell membrane through a constitutive interaction with calmodulin which binds the intracellular calcium allowing its opening. The current is characterized by a voltage-independent activation, an intracellular calcium concentration increase-dependent activation and a single-channel conductance of 10 picosiemens. Also presents an inwardly rectifying current, thus reducing its already small outward conductance of potassium ions, which is particularly the case when the membrane potential displays positive values, above + 20 mV. Activation is followed by membrane hyperpolarization. Thought to regulate neuronal excitability by contributing to the slow component of synaptic afterhyperpolarization. This is Small conductance calcium-activated potassium channel protein 3 from Sus scrofa (Pig).